A 197-amino-acid polypeptide reads, in one-letter code: ATP-dependent Clp protease proteolytic subunit 1 (197 aa).

His126 is an active-site residue.

The protein belongs to the peptidase S14 family. As to quaternary structure, fourteen ClpP subunits assemble into 2 heptameric rings which stack back to back to give a disk-like structure with a central cavity, resembling the structure of eukaryotic proteasomes.

The protein localises to the cytoplasm. The catalysed reaction is Hydrolysis of proteins to small peptides in the presence of ATP and magnesium. alpha-casein is the usual test substrate. In the absence of ATP, only oligopeptides shorter than five residues are hydrolyzed (such as succinyl-Leu-Tyr-|-NHMec, and Leu-Tyr-Leu-|-Tyr-Trp, in which cleavage of the -Tyr-|-Leu- and -Tyr-|-Trp bonds also occurs).. Its function is as follows. Cleaves peptides in various proteins in a process that requires ATP hydrolysis. Has a chymotrypsin-like activity. Plays a major role in the degradation of misfolded proteins. This is ATP-dependent Clp protease proteolytic subunit 1 from Nocardia farcinica (strain IFM 10152).